The primary structure comprises 234 residues: MEDIKTTTPEVKNEENKTSEVKEGKALEKNNKPHFVKANSSNVKPFERRSNPNNKKPFSKDGSGNKPNKIVKQSVTGLEEKIVGVKKISKTTKGGRNMRFSALAVIGDRKGNVGFGLGKSIEVPVAIRKALKSAKNNMYKVKMNKNFTLYHEVIGKHGAGKVLIKPAPKGTGVIAGGPIKVVLELCGFKDVYSKNLGKNTSLNMVRATIKGLQMQKSPKEYATLRDKTLKDIWE.

The span at 1 to 10 (MEDIKTTTPE) shows a compositional bias: polar residues. Residues 1 to 69 (MEDIKTTTPE…KDGSGNKPNK (69 aa)) are disordered. A compositionally biased stretch (basic and acidic residues) spans 11-31 (VKNEENKTSEVKEGKALEKNN). The S5 DRBM domain maps to 78-141 (LEEKIVGVKK…KSAKNNMYKV (64 aa)).

This sequence belongs to the universal ribosomal protein uS5 family. As to quaternary structure, part of the 30S ribosomal subunit. Contacts proteins S4 and S8.

With S4 and S12 plays an important role in translational accuracy. In terms of biological role, located at the back of the 30S subunit body where it stabilizes the conformation of the head with respect to the body. This is Small ribosomal subunit protein uS5 from Malacoplasma penetrans (strain HF-2) (Mycoplasma penetrans).